We begin with the raw amino-acid sequence, 142 residues long: Large ribosomal subunit protein bL17 (142 aa).

Belongs to the bacterial ribosomal protein bL17 family. As to quaternary structure, part of the 50S ribosomal subunit. Contacts protein L32.

The protein is Large ribosomal subunit protein bL17 of Rickettsia bellii (strain OSU 85-389).